A 95-amino-acid chain; its full sequence is Putative septation protein SpoVG (95 aa).

Belongs to the SpoVG family.

In terms of biological role, could be involved in septation. The protein is Putative septation protein SpoVG of Clostridium acetobutylicum (strain ATCC 824 / DSM 792 / JCM 1419 / IAM 19013 / LMG 5710 / NBRC 13948 / NRRL B-527 / VKM B-1787 / 2291 / W).